The primary structure comprises 491 residues: D-xylose-proton symporter (491 aa).

The Cytoplasmic portion of the chain corresponds to 1-9; the sequence is MNTQYNSSY. Residues 10–30 traverse the membrane as a helical segment; the sequence is IFSITLVATLGGLLFGYDTAV. Topologically, residues 31 to 55 are periplasmic; that stretch reads ISGTVESLNTVFVAPQNLSESAANS. The chain crosses the membrane as a helical span at residues 56–76; the sequence is LLGFCVASALIGCIIGGALGG. The Cytoplasmic portion of the chain corresponds to 77-89; that stretch reads YCSNRFGRRDSLK. The helical transmembrane segment at 90 to 110 threads the bilayer; it reads IAAVLFFISGVGSAWPELGFT. The Periplasmic portion of the chain corresponds to 111–133; sequence SINPDNTVPVYLAGYVPEFVIYR. Residues 134-154 form a helical membrane-spanning segment; sequence IIGGIGVGLASMLSPMYIAEL. The Cytoplasmic segment spans residues 155–165; sequence APAHIRGKLVS. The helical transmembrane segment at 166 to 186 threads the bilayer; it reads FNQFAIIFGQLLVYCVNYFIA. Gln168 is a binding site for beta-D-xylose. Residues 187 to 200 are Periplasmic-facing; it reads RSGDASWLNTDGWR. The helical transmembrane segment at 201 to 221 threads the bilayer; that stretch reads YMFASECIPALLFLMLLYTVP. Residues 222–272 are Cytoplasmic-facing; sequence ESPRWLMSRGKQEQAEGILRKIMGNTLATQAVQEIKHSLDHGRKTGGRLLM. A helical transmembrane segment spans residues 273-293; that stretch reads FGVGVIVIGVMLSIFQQFVGI. Residues 288-289 and Asn294 each bind beta-D-xylose; that span reads QQ. Residues 294 to 312 are Periplasmic-facing; the sequence is NVVLYYAPEVFKTLGASTD. The helical transmembrane segment at 313-333 threads the bilayer; it reads IALLQTIIVGVINLTFTVLAI. The Cytoplasmic segment spans residues 334–343; that stretch reads MTVDKFGRKP. The chain crosses the membrane as a helical span at residues 344 to 364; the sequence is LQIIGALGMAIGMFSLGTAFY. Over 365-369 the chain is Periplasmic; it reads TQAPG. The chain crosses the membrane as a helical span at residues 370–390; that stretch reads IVALLSMLFYVAAFAMSWGPV. The Cytoplasmic segment spans residues 391–407; sequence CWVLLSEIFPNAIRGKA. The beta-D-xylose site is built by Trp392 and Gln415. A helical transmembrane segment spans residues 408–428; it reads LAIAVAAQWLANYFVSWTFPM. Over 429–442 the chain is Periplasmic; it reads MDKNSWLVAHFHNG. Residues 443–463 traverse the membrane as a helical segment; the sequence is FSYWIYGCMGVLAALFMWKFV. Over 464-491 the chain is Cytoplasmic; it reads PETKGKTLEELEALWEPETKKTQQTATL.

It belongs to the major facilitator superfamily. Sugar transporter (TC 2.A.1.1) family.

The protein resides in the cell inner membrane. It carries out the reaction D-xylose(in) + H(+)(in) = D-xylose(out) + H(+)(out). Functionally, uptake of D-xylose across the boundary membrane with the concomitant transport of protons into the cell (symport system). This is D-xylose-proton symporter (xylE) from Escherichia coli O157:H7.